We begin with the raw amino-acid sequence, 419 residues long: UDP-N-acetylglucosamine 1-carboxyvinyltransferase (419 aa).

Position 22–23 (22–23) interacts with phosphoenolpyruvate; it reads KN. UDP-N-acetyl-alpha-D-glucosamine is bound at residue Arg93. Cys117 (proton donor) is an active-site residue. Cys117 bears the 2-(S-cysteinyl)pyruvic acid O-phosphothioketal mark. UDP-N-acetyl-alpha-D-glucosamine is bound by residues 122–126, Asp308, and Ile330; that span reads RPVDL.

Belongs to the EPSP synthase family. MurA subfamily.

The protein resides in the cytoplasm. The enzyme catalyses phosphoenolpyruvate + UDP-N-acetyl-alpha-D-glucosamine = UDP-N-acetyl-3-O-(1-carboxyvinyl)-alpha-D-glucosamine + phosphate. It participates in cell wall biogenesis; peptidoglycan biosynthesis. Cell wall formation. Adds enolpyruvyl to UDP-N-acetylglucosamine. The protein is UDP-N-acetylglucosamine 1-carboxyvinyltransferase of Pseudomonas putida (Arthrobacter siderocapsulatus).